The sequence spans 283 residues: Protein ATAF2 (283 aa).

The NAC domain occupies 7–159 (LPAGFRFHPT…DWVLCRIYNK (153 aa)). Residues 103-165 (LGIKKALVFY…IYNKKGTMEK (63 aa)) mediate DNA binding. The interval 171 to 211 (EKPRTTTMAEQSSSPFDTSDSTYPTLQEDDSSSSGGHGHVV) is disordered. Positions 175–195 (TTTMAEQSSSPFDTSDSTYPT) are enriched in polar residues.

In terms of assembly, homodimer. Interacts with AHK2. Interacts with AHL12 and AHL27. Interacts with the helicase domain of the tobamovirus (TMV) replicase. As to expression, expressed in roots, cotyledons, rosette leaves, cauline leaves and mature flowers. Expressed at low levels in stems and flower buds.

The protein resides in the nucleus. Functionally, involved in disease resistance response. May function as repressor of pathogenesis-related proteins. May function in the regulation of host basal defense responses against viral infection. Transcriptional activator involved in responses to wounding and infection with tobamovirus (TMV). Binds to the DNA sequences 5'-AAAATATCT-3' and 5'AGATTTTT-3' of CYP734A1/BAS1 and CYP72C1/SOB7 promoters, respectively. Acts as a suppressor of the brassinosteroid (BR)-inactivating enzymes CYP734A1/BAS1 and CYP72C1/SOB7, and prevents their expression in almost all tissues. Plays a central role in integrating BR homeostasis and seedling development. Regulates the spatial regulation of BR homeostasis and participates in the regulation of hypocotyl elongation and root growth by suppressing BR catabolism. Mediates connection between BR catabolism and photomorphogenesis. Binds to, and transactivates the promoter of the auxin biosynthetic gene NIT2. Stress-responsive NAC transcription factor involved in ABA-inducible leaf senescence signaling. Required for normal seed development and morphology. In Arabidopsis thaliana (Mouse-ear cress), this protein is Protein ATAF2 (NAC081).